Consider the following 454-residue polypeptide: Glutamyl-tRNA(Gln) amidotransferase subunit A (454 aa).

Residues lysine 56 and serine 131 each act as charge relay system in the active site. Catalysis depends on serine 155, which acts as the Acyl-ester intermediate.

This sequence belongs to the amidase family. GatA subfamily. As to quaternary structure, heterotrimer of A, B and C subunits.

It catalyses the reaction L-glutamyl-tRNA(Gln) + L-glutamine + ATP + H2O = L-glutaminyl-tRNA(Gln) + L-glutamate + ADP + phosphate + H(+). Allows the formation of correctly charged Gln-tRNA(Gln) through the transamidation of misacylated Glu-tRNA(Gln) in organisms which lack glutaminyl-tRNA synthetase. The reaction takes place in the presence of glutamine and ATP through an activated gamma-phospho-Glu-tRNA(Gln). In Campylobacter lari (strain RM2100 / D67 / ATCC BAA-1060), this protein is Glutamyl-tRNA(Gln) amidotransferase subunit A.